The chain runs to 483 residues: Wax ester synthase/diacylglycerol acyltransferase 10 (483 aa).

The Cytoplasmic segment spans residues 1–203; sequence MTKEEVEEEP…SINAVYYAVR (203 aa). His143 (proton acceptor) is an active-site residue. Residues 204–222 form a helical membrane-spanning segment; sequence LIWNTIVDLLLLWATSLFF. At 223 to 483 the chain is on the lumenal side; the sequence is KDTETPISEG…MKDTLSGKSD (261 aa). Residues Asn394 and Asn399 are each glycosylated (N-linked (GlcNAc...) asparagine).

The protein in the N-terminal section; belongs to the long-chain O-acyltransferase family. As to expression, mostly expressed in roots.

It is found in the cell membrane. Its subcellular location is the endoplasmic reticulum membrane. It catalyses the reaction an acyl-CoA + a 1,2-diacyl-sn-glycerol = a triacyl-sn-glycerol + CoA. The enzyme catalyses a long chain fatty alcohol + a fatty acyl-CoA = a wax ester + CoA. It participates in glycerolipid metabolism; triacylglycerol biosynthesis. It functions in the pathway lipid metabolism. Bifunctional wax ester synthase/diacylglycerol acyltransferase. Involved in cuticular wax biosynthesis. In Arabidopsis thaliana (Mouse-ear cress), this protein is Wax ester synthase/diacylglycerol acyltransferase 10.